The sequence spans 325 residues: MSQPPEHPGNPADPQGGNQGAGSYPPPGYGAPPPPPGYGPPPGTYLPPGYNAPPPPPGYGPPPGPPPPGYPTHLQSSGFSVGDAISWSWNRFTQNAVTLVVPVLAYAVALAAVIGATAGLVVALSDRATTAYTNTSGVSSESVDITMTPAAGIVMFLGYIALFALVLYMHAGILTGCLDIADGKPVTIATFFRPRNLGLVLVTGLLIVAVTFIGGLLCVIPGLIFGFVAQFAVAFAVDRSTSPIDSVKASIETVGSNIGGSVLSWLAQLTAVLVGELLCFVGMLIGIPVAALIHVYTYRKLSGGQVVEAVRPAPPVGWPPGPQLA.

A disordered region spans residues 1-75 (MSQPPEHPGN…PPPGYPTHLQ (75 aa)). The span at 24–70 (YPPPGYGAPPPPPGYGPPPGTYLPPGYNAPPPPPGYGPPPGPPPPGY) shows a compositional bias: pro residues. 4 helical membrane passes run 96–116 (AVTL…VIGA), 153–173 (IVMF…HAGI), 205–225 (LLIV…GLIF), and 273–293 (LVGE…AALI).

The protein localises to the cell membrane. This is an uncharacterized protein from Mycobacterium tuberculosis (strain ATCC 25618 / H37Rv).